The sequence spans 211 residues: MAVTVSAEEWVPRTRVGRMVKEGKITSIYELFEKNLPILEPEIVDYLVPDLKHEVLDVSLVQKVTDAGRVTRLRVLVVIGNEDGLVGLGMGKAKQMRFAIQKALANAKLNITPVRRGCGSWECTCGEPHSVPFTVRGKSGSVEVILKPAPRGTGLVAGDVAKAVLRYAGIKDVWTHTEGETRTTHNFAKATFNALKQTYKFLAPWDWVQQQ.

The S5 DRBM domain maps to 51–114; it reads LKHEVLDVSL…ANAKLNITPV (64 aa).

It belongs to the universal ribosomal protein uS5 family. In terms of assembly, part of the 30S ribosomal subunit. Contacts protein S4.

With S4 and S12 plays an important role in translational accuracy. The chain is Small ribosomal subunit protein uS5 from Ignicoccus hospitalis (strain KIN4/I / DSM 18386 / JCM 14125).